Reading from the N-terminus, the 381-residue chain is Cytochrome b (381 aa).

4 helical membrane passes run 34-54 (FGSL…MLAM), 78-99 (WMIR…YLHI), 114-134 (WNTG…GYVL), and 179-199 (FFAL…VHLT). Residues H84 and H98 each coordinate heme b. Residues H183 and H197 each coordinate heme b. A ubiquinone is bound at residue H202. Transmembrane regions (helical) follow at residues 227–247 (MKDL…AFFT), 289–309 (LGGV…PLLH), 321–341 (MSQI…WVGS), and 348–368 (FIII…FLFP).

This sequence belongs to the cytochrome b family. In terms of assembly, the cytochrome bc1 complex contains 11 subunits: 3 respiratory subunits (MT-CYB, CYC1 and UQCRFS1), 2 core proteins (UQCRC1 and UQCRC2) and 6 low-molecular weight proteins (UQCRH/QCR6, UQCRB/QCR7, UQCRQ/QCR8, UQCR10/QCR9, UQCR11/QCR10 and a cleavage product of UQCRFS1). This cytochrome bc1 complex then forms a dimer. Heme b serves as cofactor.

The protein localises to the mitochondrion inner membrane. In terms of biological role, component of the ubiquinol-cytochrome c reductase complex (complex III or cytochrome b-c1 complex) that is part of the mitochondrial respiratory chain. The b-c1 complex mediates electron transfer from ubiquinol to cytochrome c. Contributes to the generation of a proton gradient across the mitochondrial membrane that is then used for ATP synthesis. The sequence is that of Cytochrome b (MT-CYB) from Nothoprocta perdicaria (Chilean tinamou).